Reading from the N-terminus, the 161-residue chain is Allophycocyanin alpha chain (161 aa).

At Asn71 the chain carries N4-methylasparagine. Residue Cys81 coordinates (2R,3E)-phycocyanobilin.

It belongs to the phycobiliprotein family. Heterodimer of an alpha and a beta chain. Post-translationally, contains one covalently linked phycocyanobilin chromophore.

It localises to the cellular thylakoid membrane. Its function is as follows. Light-harvesting photosynthetic bile pigment-protein from the phycobiliprotein complex. Allophycocyanin has a maximum absorption at approximately 650 nanometers. This chain is Allophycocyanin alpha chain (apcA), found in Synechocystis sp. (strain ATCC 27184 / PCC 6803 / Kazusa).